We begin with the raw amino-acid sequence, 716 residues long: 1,4-alpha-glucan branching enzyme GlgB (716 aa).

The active-site Nucleophile is Asp-399. Residue Glu-452 is the Proton donor of the active site.

This sequence belongs to the glycosyl hydrolase 13 family. GlgB subfamily. In terms of assembly, monomer.

The catalysed reaction is Transfers a segment of a (1-&gt;4)-alpha-D-glucan chain to a primary hydroxy group in a similar glucan chain.. It functions in the pathway glycan biosynthesis; glycogen biosynthesis. Functionally, catalyzes the formation of the alpha-1,6-glucosidic linkages in glycogen by scission of a 1,4-alpha-linked oligosaccharide from growing alpha-1,4-glucan chains and the subsequent attachment of the oligosaccharide to the alpha-1,6 position. This Rhodopseudomonas palustris (strain HaA2) protein is 1,4-alpha-glucan branching enzyme GlgB.